The primary structure comprises 302 residues: Succinate--CoA ligase [ADP-forming] subunit alpha (302 aa).

CoA-binding positions include 17-20 (TGST), lysine 43, and 96-98 (ITE). Tyrosine 159 serves as a coordination point for substrate. Residue histidine 247 is the Tele-phosphohistidine intermediate of the active site.

Belongs to the succinate/malate CoA ligase alpha subunit family. As to quaternary structure, heterotetramer of two alpha and two beta subunits.

It catalyses the reaction succinate + ATP + CoA = succinyl-CoA + ADP + phosphate. The catalysed reaction is GTP + succinate + CoA = succinyl-CoA + GDP + phosphate. The protein operates within carbohydrate metabolism; tricarboxylic acid cycle; succinate from succinyl-CoA (ligase route): step 1/1. Functionally, succinyl-CoA synthetase functions in the citric acid cycle (TCA), coupling the hydrolysis of succinyl-CoA to the synthesis of either ATP or GTP and thus represents the only step of substrate-level phosphorylation in the TCA. The alpha subunit of the enzyme binds the substrates coenzyme A and phosphate, while succinate binding and nucleotide specificity is provided by the beta subunit. In Staphylococcus epidermidis (strain ATCC 35984 / DSM 28319 / BCRC 17069 / CCUG 31568 / BM 3577 / RP62A), this protein is Succinate--CoA ligase [ADP-forming] subunit alpha.